The primary structure comprises 122 residues: Large ribosomal subunit protein uL14c (122 aa).

This sequence belongs to the universal ribosomal protein uL14 family. Part of the 50S ribosomal subunit.

The protein resides in the plastid. It is found in the chloroplast. Functionally, binds to 23S rRNA. This Platanus occidentalis (Sycamore) protein is Large ribosomal subunit protein uL14c.